Reading from the N-terminus, the 251-residue chain is 5'-nucleotidase SurE (251 aa).

A divalent metal cation-binding residues include D8, D9, S39, and N95.

This sequence belongs to the SurE nucleotidase family. The cofactor is a divalent metal cation.

It localises to the cytoplasm. The catalysed reaction is a ribonucleoside 5'-phosphate + H2O = a ribonucleoside + phosphate. In terms of biological role, nucleotidase that shows phosphatase activity on nucleoside 5'-monophosphates. The sequence is that of 5'-nucleotidase SurE from Ralstonia nicotianae (strain ATCC BAA-1114 / GMI1000) (Ralstonia solanacearum).